The sequence spans 559 residues: Estrogen receptor beta (559 aa).

The tract at residues 1-155 is modulating; that stretch reads MAVACSPEKD…SSGGKADLHF (155 aa). The disordered stretch occupies residues 128 to 148; sequence TSSKSARRRSQENEEGEVSSG. 2 consecutive NR C4-type zinc fingers follow at residues 156–176 and 192–216; these read CAVCHDYASGYHYGVWSCEGC and CPATNQCTIDKNRRKSCQACRLHKC. Positions 156-221 form a DNA-binding region, nuclear receptor; that stretch reads CAVCHDYASG…RLHKCYNVGM (66 aa). Positions 243–254 are enriched in polar residues; the sequence is RLSSQGRTSGPS. The disordered stretch occupies residues 243 to 269; that stretch reads RLSSQGRTSGPSVLNGPAVGPLNTPQP. An NR LBD domain is found at 273-509; the sequence is TSKQLIERIM…DLLLEMLDAH (237 aa). The tract at residues 514–559 is disordered; it reads SRLPRRSPQQETVEQCDAPARPHSPGTSGPTNTWTPSCTGGRGEPQ. The segment covering 538–551 has biased composition (polar residues); sequence PGTSGPTNTWTPSC.

Belongs to the nuclear hormone receptor family. NR3 subfamily. In terms of assembly, binds DNA as a homodimer. Can form a heterodimer with ER-alpha.

Its subcellular location is the nucleus. Binds estrogens with an affinity similar to that of ER-alpha, and activates expression of reporter genes containing estrogen response elements (ERE) in an estrogen-dependent manner. This chain is Estrogen receptor beta (esr2), found in Sparus aurata (Gilthead sea bream).